The chain runs to 1034 residues: Glycine dehydrogenase (decarboxylating) B, mitochondrial (1034 aa).

The transit peptide at 1 to 63 (MERARRLAIL…LNGFGSQVRT (63 aa)) directs the protein to the mitochondrion. Position 770 is an N6-(pyridoxal phosphate)lysine (Lys770).

The protein belongs to the GcvP family. In terms of assembly, homodimer. The glycine cleavage system is composed of four proteins: P, T, L and H. The cofactor is pyridoxal 5'-phosphate.

The protein localises to the mitochondrion. The enzyme catalyses N(6)-[(R)-lipoyl]-L-lysyl-[glycine-cleavage complex H protein] + glycine + H(+) = N(6)-[(R)-S(8)-aminomethyldihydrolipoyl]-L-lysyl-[glycine-cleavage complex H protein] + CO2. In terms of biological role, the glycine cleavage system catalyzes the degradation of glycine. The P protein binds the alpha-amino group of glycine through its pyridoxal phosphate cofactor; CO(2) is released and the remaining methylamine moiety is then transferred to the lipoamide cofactor of the H protein. The chain is Glycine dehydrogenase (decarboxylating) B, mitochondrial (GDCSPB) from Flaveria pringlei.